Consider the following 157-residue polypeptide: Protein PEROXIN-4 (157 aa).

Residues 3 to 153 enclose the UBC core domain; sequence ASRARLFKEY…AQMYTRLAAM (151 aa). Cys90 (glycyl thioester intermediate) is an active-site residue.

This sequence belongs to the ubiquitin-conjugating enzyme family. As to quaternary structure, interacts with PEX22.

It localises to the peroxisome membrane. It carries out the reaction S-ubiquitinyl-[E1 ubiquitin-activating enzyme]-L-cysteine + [E2 ubiquitin-conjugating enzyme]-L-cysteine = [E1 ubiquitin-activating enzyme]-L-cysteine + S-ubiquitinyl-[E2 ubiquitin-conjugating enzyme]-L-cysteine.. It functions in the pathway protein modification; protein ubiquitination. In terms of biological role, required for peroxisome biogenesis. Necessary for the developmental elimination of obsolete peroxisome matrix proteins. May be involved in the ubiquitination of PEX5, targeting it for recycling. Accepts the ubiquitin from the E1 complex and catalyzes its covalent attachment to other proteins. This chain is Protein PEROXIN-4 (PEX4), found in Arabidopsis thaliana (Mouse-ear cress).